The chain runs to 302 residues: tRNA dimethylallyltransferase (302 aa).

Residue 9-16 coordinates ATP; the sequence is GPTGTGKS. A substrate-binding site is contributed by 11 to 16; that stretch reads TGTGKS.

It belongs to the IPP transferase family. As to quaternary structure, monomer. The cofactor is Mg(2+).

It carries out the reaction adenosine(37) in tRNA + dimethylallyl diphosphate = N(6)-dimethylallyladenosine(37) in tRNA + diphosphate. In terms of biological role, catalyzes the transfer of a dimethylallyl group onto the adenine at position 37 in tRNAs that read codons beginning with uridine, leading to the formation of N6-(dimethylallyl)adenosine (i(6)A). The polypeptide is tRNA dimethylallyltransferase (Mycolicibacterium smegmatis (strain ATCC 700084 / mc(2)155) (Mycobacterium smegmatis)).